We begin with the raw amino-acid sequence, 63 residues long: Small integral membrane protein 43 (63 aa).

Important for interaction with SLC2A1 and SLC2A3 stretches follow at residues 7-29 (LLLY…FVVI) and 51-57 (HREPWGF). Residues 9–29 (LYLALFFFLLFLLFLLLFVVI) form a helical membrane-spanning segment.

As to quaternary structure, interacts with glucose transporters SLC2A1/GLUT1 and SLC2A3/GLUT3; the interactions may promote SLC2A1- and SLC2A3-mediated glucose transport to meet the energy needs of mesendoderm differentiation. In terms of tissue distribution, accumulates in the posterior primitive streak of mid-gastrulation embryos at 7.0 dpc. In the adult, highly abundant and enriched in the brain compared to other organs.

Its subcellular location is the cell membrane. Its function is as follows. Required for mesendoderm differentiation. Interacts with glucose transporters and promotes glucose uptake. Probably augments the glucose uptake capacity of glucose transporter proteins to meet the energy needs of mesendoderm differentiation. The polypeptide is Small integral membrane protein 43 (Mus musculus (Mouse)).